A 183-amino-acid polypeptide reads, in one-letter code: Photosystem I assembly protein Ycf3 (183 aa).

TPR repeat units follow at residues Ala-35 to Ser-68, Ser-72 to Leu-105, and Gly-120 to Asn-153.

This sequence belongs to the Ycf3 family.

Its subcellular location is the plastid. It localises to the chloroplast thylakoid membrane. Its function is as follows. Essential for the assembly of the photosystem I (PSI) complex. May act as a chaperone-like factor to guide the assembly of the PSI subunits. The polypeptide is Photosystem I assembly protein Ycf3 (Adiantum capillus-veneris (Maidenhair fern)).